The primary structure comprises 993 residues: ATP-dependent DNA helicase MPH1 (993 aa).

Residues 94-261 enclose the Helicase ATP-binding domain; it reads IVHKSLFQNT…EVVNNLDISK (168 aa). Position 107 to 114 (107 to 114) interacts with ATP; it reads IPTGMGKT. The DEAH box signature appears at 209-212; that stretch reads DEAH. The region spanning 507-655 is the Helicase C-terminal domain; the sequence is KVERLHRQEQ…CIDYKKSDRI (149 aa). The tract at residues 530 to 551 is disordered; sequence NDKLERSARRTGSSEEAQISGM. A compositionally biased stretch (polar residues) spans 539 to 551; sequence RTGSSEEAQISGM. An FKH1-binding region region spans residues 751–810; sequence LVTSNENPSKKRKIFKALDNLENDSTEEASSSLETEDEEVSDDNNVFIAEGQNGCQKDLE. Thr776 and Thr785 each carry phosphothreonine.

It belongs to the DEAD box helicase family. DEAH subfamily. FANCM sub-subfamily. As to quaternary structure, interacts with the MHF histone-fold complex composed of MHF1 and MHF2 to form the FANCM-MHF complex. Interacts with FHK1. Post-translationally, phosphorylation at both Thr-776 and Thr-785 is required for the interaction with FKH1.

It is found in the nucleus. The enzyme catalyses ATP + H2O = ADP + phosphate + H(+). In terms of biological role, ATP-dependent DNA helicase involved in DNA damage repair by homologous recombination and in genome maintenance. Capable of unwinding D-loops. Plays a role in limiting crossover recombinants during mitotic DNA double-strand break (DSB) repair. Prevents crossovers between ectopic sequences by removing substrates for MUS81-MMS4 or RAD1-RAD10 cleavage. Component of a FANCM-MHF complex which promotes gene conversion at blocked replication forks, probably by reversal of the stalled fork. Binds to flap-structured DNA but not to non-flap nicked DNA, and participates in Okazaki fragment processing by stimulating the endonuclease activities of FEN1 and DNA2. Involved in recombination donor preference during mating-type switching via interaction with FKH1. The polypeptide is ATP-dependent DNA helicase MPH1 (Saccharomyces cerevisiae (strain ATCC 204508 / S288c) (Baker's yeast)).